A 189-amino-acid chain; its full sequence is MKQSSPTYLKHHFLIAMPHMADPNFAQTVTYLVEHNEQGAMGLVINRPSGLNLAEVLEQLKPDALPPARCQHIDIYNGGPVQTDRGFVLHPSGLSYQSTLELGELAMSTSQDVLFAIAAGTGPEKSLISLGYAGWEAGQLEAELSDNAWLTCPADPAILFDLPPEERLSAAAARLGVNLSLLTAQAGHA.

Belongs to the UPF0301 (AlgH) family.

This chain is UPF0301 protein PLES_04031, found in Pseudomonas aeruginosa (strain LESB58).